Consider the following 367-residue polypeptide: Germination protease (367 aa).

Positions 1–15 are excised as a propeptide; it reads MKEPLDLSKYSVRTD.

The protein belongs to the peptidase A25 family. Homotetramer. Autoproteolytically processed. The inactive tetrameric zymogen termed p46 autoprocesses to a smaller form termed p41, which is active only during spore germination.

The enzyme catalyses Endopeptidase action with P4 Glu or Asp, P1 preferably Glu &gt; Asp, P1' hydrophobic and P2' Ala.. Its function is as follows. Initiates the rapid degradation of small, acid-soluble proteins during spore germination. The polypeptide is Germination protease (Bacillus cereus (strain ATCC 10987 / NRS 248)).